The sequence spans 1759 residues: Histone-lysine N-methyltransferase ASHH2 (1759 aa).

Basic and acidic residues-rich tracts occupy residues 154-165, 197-206, and 215-224; these read QEKEAPQAKEDE, ETTKHIKPDE, and RFDDGGKEGR. Disordered regions lie at residues 154–181, 197–237, 437–482, 515–556, and 738–816; these read QEKEAPQAKEDEGYGGTTLPIGGSGIDT, ETTK…GSSD, CEAG…IESI, SNNI…NRNI, and DELR…VGRI. The segment covering 462-472 has biased composition (basic residues); the sequence is SARHLRKSSRK. The segment covering 530-556 has biased composition (polar residues); the sequence is RSQGNLNNGEHNRSSHNGNVEGSNRNI. The segment covering 758–775 has biased composition (basic residues); that stretch reads KKAKHPKSKSNGTKKGKS. 2 stretches are compositionally biased toward basic and acidic residues: residues 776–797 and 804–816; these read KFSESAKDGRKNESHEGVEQRK and GRDDSDYPEVGRI. Residues 859 to 912 form a CW-type zinc finger; the sequence is YSTESAWVRCDDCFKWRRIPASVVGSIDESSRWICMNNSDKRFADCSKSQEMSN. Zn(2+)-binding residues include C868, C871, C893, and C904. The region spanning 974-1024 is the AWS domain; sequence DEIMVCHCKPSPDGRLGCGEECLNRMLNIECLQGTCPAGDLCSNQQFQKRK. Residues 1026–1143 form the SET domain; the sequence is VKFERFQSGK…KGQELTFDYN (118 aa). Y1142 contacts S-adenosyl-L-methionine. One can recognise a Post-SET domain in the interval 1151 to 1167; sequence AAKKCYCGSSHCRGYIG. Disordered regions lie at residues 1225-1253, 1271-1345, 1496-1606, and 1727-1759; these read GYKDLAPDNTQTQSSVSVKLPEREIPPPL, AVQQ…PGVN, ERSE…FSSP, and KQSVPPWLRNNGGEKTANSPIPGNLTLEKKLNS. Polar residues predominate over residues 1232–1241; sequence DNTQTQSSVS. Positions 1284 to 1293 are enriched in low complexity; sequence STSPTSSSLS. Positions 1304–1316 are enriched in basic and acidic residues; sequence KTTKHGSGEDKKI. Basic residues predominate over residues 1317-1326; it reads LPRPRPRMKT. Residues 1511–1521 are compositionally biased toward basic and acidic residues; it reads ASQEPRYDHQS. A compositionally biased stretch (polar residues) spans 1530 to 1556; that stretch reads SVTSSKAATPETASVSEGYSEPNSGLP. Positions 1566-1577 are enriched in basic and acidic residues; the sequence is RWDQPSKTKEQR. The segment covering 1581 to 1594 has biased composition (polar residues); sequence ILSQQTDETNGNQD.

The protein belongs to the class V-like SAM-binding methyltransferase superfamily. Histone-lysine methyltransferase family. SET2 subfamily. In terms of assembly, interacts with FRI and SUF4, two components of the transcription activator complex FRI-C, and with SWC6, a component of the SWR1 chromatin-remodeling complex. Interacts with BZR2/BES1 and IWS1. Ubiquitous, with higher levels in young tissues, including shoot and root apex. Expressed in ovules, tapetum layer and microspores.

The protein localises to the nucleus. It localises to the chromosome. Its subcellular location is the centromere. It carries out the reaction N(6)-methyl-L-lysyl(36)-[histone H3] + S-adenosyl-L-methionine = N(6),N(6)-dimethyl-L-lysyl(36)-[histone H3] + S-adenosyl-L-homocysteine + H(+). It catalyses the reaction N(6),N(6)-dimethyl-L-lysyl(36)-[histone H3] + S-adenosyl-L-methionine = N(6),N(6),N(6)-trimethyl-L-lysyl(36)-[histone H3] + S-adenosyl-L-homocysteine + H(+). Histone methyltransferase involved in di and tri-methylation of 'Lys-36' of histone H3 (H3K36me2 and H3K36me3). Binds to H3 already mono- or di-methylated on 'Lys-4'(H3K4me1 or H3K4me2), but not to H3K4me3. H3K4me and H3K36me represent specific tags for epigenetic transcriptional activation. Positively regulates FLC transcription to prevent early flowering transition. Required for flowering transition in response to vernalization and for the maintenance of FLC expression in late embryos, but dispensable for the initial reactivation in early embryos during reprogramming. Also seems to modulate several traits including floral organ size, root size and dormancy. Promotes apical dominance. Directly involved in the tri-methylation of 'Lys-36' of histone H3 (H3K36me3) at LAZ5 chromatin to maintain a transcriptionally active state of LAZ5, a TIR-NB-LRR protein involved in innate immunity. Required for brassinosteroid (BR)-induced gene expression and histone H3 trimethylation on 'Lys-36' (H3K36me3) in BR-regulated genes. This chain is Histone-lysine N-methyltransferase ASHH2, found in Arabidopsis thaliana (Mouse-ear cress).